Here is a 250-residue protein sequence, read N- to C-terminus: 3-deoxy-manno-octulosonate cytidylyltransferase (250 aa).

Belongs to the KdsB family.

It is found in the cytoplasm. It carries out the reaction 3-deoxy-alpha-D-manno-oct-2-ulosonate + CTP = CMP-3-deoxy-beta-D-manno-octulosonate + diphosphate. The protein operates within nucleotide-sugar biosynthesis; CMP-3-deoxy-D-manno-octulosonate biosynthesis; CMP-3-deoxy-D-manno-octulosonate from 3-deoxy-D-manno-octulosonate and CTP: step 1/1. It participates in bacterial outer membrane biogenesis; lipopolysaccharide biosynthesis. Its function is as follows. Activates KDO (a required 8-carbon sugar) for incorporation into bacterial lipopolysaccharide in Gram-negative bacteria. This is 3-deoxy-manno-octulosonate cytidylyltransferase from Bacteroides thetaiotaomicron (strain ATCC 29148 / DSM 2079 / JCM 5827 / CCUG 10774 / NCTC 10582 / VPI-5482 / E50).